Consider the following 126-residue polypeptide: Penicillinase repressor (126 aa).

Positions 7–71 (EISMAEWDVM…KSENIYFYSS (65 aa)) form a DNA-binding region, H-T-H motif. The interval 74–126 (KEDDIKMKTAKTFLNKLYGGDMKSLVLNFAKNEELNNKEIEELRDILNDISKK) is important for dimerization.

Belongs to the BlaI transcriptional regulatory family. As to quaternary structure, homodimer. In terms of processing, upon exposure to beta-lactams, the protease BlaR1 is activated and cleaves BlaI at a single site. This proteolytic cleavage impairs dimerization and abolishes repressor activity.

It localises to the cytoplasm. Its function is as follows. Transcriptional repressor that constitutively blocks expression of beta-lactamase. Binds DNA as a dimer. The chain is Penicillinase repressor (blaI) from Staphylococcus aureus.